A 534-amino-acid polypeptide reads, in one-letter code: C-22 sterol desaturase ERG5B (534 aa).

A helical transmembrane segment spans residues 43–61; that stretch reads IAVTIFAVLIAYDQFMYIW. Heme is bound at residue cysteine 480.

This sequence belongs to the cytochrome P450 family. Requires heme as cofactor.

Its subcellular location is the endoplasmic reticulum membrane. The enzyme catalyses 5-dehydroepisterol + NADPH + O2 + H(+) = ergosta-5,7,22,24(28)-tetraen-3beta-ol + NADP(+) + 2 H2O. The protein operates within steroid metabolism; ergosterol biosynthesis. Its function is as follows. C-22 sterol desaturase; part of the third module of ergosterol biosynthesis pathway that includes the late steps of the pathway. ERG5A and ERG5B convert 5-dehydroepisterol into ergosta-5,7,22,24(28)-tetraen-3beta-ol by forming the C-22(23) double bond in the sterol side chain. The third module or late pathway involves the ergosterol synthesis itself through consecutive reactions that mainly occur in the endoplasmic reticulum (ER) membrane. Firstly, the squalene synthase ERG9 catalyzes the condensation of 2 farnesyl pyrophosphate moieties to form squalene, which is the precursor of all steroids. Squalene synthase is crucial for balancing the incorporation of farnesyl diphosphate (FPP) into sterol and nonsterol isoprene synthesis. Secondly, squalene is converted into lanosterol by the consecutive action of the squalene epoxidase ERG1 and the lanosterol synthase ERG7. Then, the delta(24)-sterol C-methyltransferase ERG6 methylates lanosterol at C-24 to produce eburicol. Eburicol is the substrate of the sterol 14-alpha demethylase encoded by CYP51A, CYP51B and CYP51C, to yield 4,4,24-trimethyl ergosta-8,14,24(28)-trienol. CYP51B encodes the enzyme primarily responsible for sterol 14-alpha-demethylation, and plays an essential role in ascospore formation. CYP51A encodes an additional sterol 14-alpha-demethylase, induced on ergosterol depletion and responsible for the intrinsic variation in azole sensitivity. The third CYP51 isoform, CYP51C, does not encode a sterol 14-alpha-demethylase, but is required for full virulence on host wheat ears. The C-14 reductase ERG24 then reduces the C14=C15 double bond which leads to 4,4-dimethylfecosterol. A sequence of further demethylations at C-4, involving the C-4 demethylation complex containing the C-4 methylsterol oxidases ERG25, the sterol-4-alpha-carboxylate 3-dehydrogenase ERG26 and the 3-keto-steroid reductase ERG27, leads to the production of fecosterol via 4-methylfecosterol. ERG28 has a role as a scaffold to help anchor ERG25, ERG26 and ERG27 to the endoplasmic reticulum. The C-8 sterol isomerase ERG2 then catalyzes the reaction which results in unsaturation at C-7 in the B ring of sterols and thus converts fecosterol to episterol. The sterol-C5-desaturases ERG3A and ERG3BB then catalyze the introduction of a C-5 double bond in the B ring to produce 5-dehydroepisterol. The C-22 sterol desaturases ERG5A and ERG5B further convert 5-dehydroepisterol into ergosta-5,7,22,24(28)-tetraen-3beta-ol by forming the C-22(23) double bond in the sterol side chain. Finally, ergosta-5,7,22,24(28)-tetraen-3beta-ol is substrate of the C-24(28) sterol reductase ERG4 to produce ergosterol. The sequence is that of C-22 sterol desaturase ERG5B from Gibberella zeae (strain ATCC MYA-4620 / CBS 123657 / FGSC 9075 / NRRL 31084 / PH-1) (Wheat head blight fungus).